A 555-amino-acid polypeptide reads, in one-letter code: GMP synthase [glutamine-hydrolyzing] (555 aa).

One can recognise a Glutamine amidotransferase type-1 domain in the interval 8–234 (KILVLNFGSQ…AYNICKCKKQ (227 aa)). Cys89 serves as the catalytic Nucleophile; for GATase activity. Gln93, Asn169, Asp172, and His208 together coordinate L-glutamine. Catalysis depends on for GATase activity residues His208 and Glu210. One can recognise a GMPS ATP-PPase domain in the interval 235-430 (FDPIRYHELE…LNLPEEITNR (196 aa)). ATP is bound at residue 262 to 268 (SGGIDST). XMP is bound by residues Arg336, Gln476, Lys547, Ile552, and Glu553.

As to quaternary structure, homodimer (via the GMPS ATP-PPase domain). It depends on Mg(2+) as a cofactor.

The catalysed reaction is XMP + L-glutamine + ATP + H2O = GMP + L-glutamate + AMP + diphosphate + 2 H(+). It functions in the pathway purine metabolism; GMP biosynthesis; GMP from XMP (L-Gln route): step 1/1. With respect to regulation, the GATase domain is allosterically activated by the binding of substrates, ATP and XMP, to the ATPPase domain, thus ensuring that glutamine hydrolysis occurs only when the ATPPase domain is primed to receive ammonia. Inhibited by Na(+). Inhibited by the reaction product GMP. Functionally, catalyzes the conversion of xanthine monophosphate (XMP) to GMP in the presence of glutamine and ATP through an adenyl-XMP intermediate, which is the final step of de novo synthesis of GMP. The conversion of XMP to GMP involves the coordinated action of the glutamine amidotransferase (GATase) domain that catalyzes the hydrolysis of the amide side chain of glutamine producing ammonia and the ATP pyrophosphatase (ATPPase) domain that catalyzes the synthesis of adenyl-XMP intermediate from ATP. The ammonia produced by the GATase domain is tunnelled to the ATP-PPase domain where it attacks the adenyl-XMP intermediate generating GMP. This chain is GMP synthase [glutamine-hydrolyzing], found in Plasmodium falciparum (isolate 3D7).